Reading from the N-terminus, the 28-residue chain is Potassium channel toxin alpha-KTx 13.2 (28 aa).

Disulfide bonds link C2–C19, C6–C24, and C10–C26. The segment at 17 to 24 (IKCINGSC) is interaction with Ca(2+)-activated K(+) channels.

The protein belongs to the short scorpion toxin superfamily. Potassium channel inhibitor family. Alpha-KTx 13 subfamily. As to expression, expressed by the venom gland.

It localises to the secreted. Potent and selective inhibitor of Kv1.2/KCNA2 potassium channels. This is Potassium channel toxin alpha-KTx 13.2 from Orthochirus scrobiculosus (Central Asian scorpion).